We begin with the raw amino-acid sequence, 456 residues long: uncharacterized protein (456 aa).

A YrdC-like domain is found at 277-440; that stretch reads IKNTKTIKQL…TKQLVRTTAK (164 aa).

This is an uncharacterized protein from Mycoplasma genitalium (strain ATCC 33530 / DSM 19775 / NCTC 10195 / G37) (Mycoplasmoides genitalium).